Here is a 514-residue protein sequence, read N- to C-terminus: Nuclear hormone receptor family member nhr-85 (514 aa).

The segment at 28–48 is disordered; that stretch reads TSFSSPPATSSSSLLSPSPSS. The nuclear receptor DNA-binding region spans 110–186; the sequence is TILCQVCSDK…VGMSRDAVRF (77 aa). 2 consecutive NR C4-type zinc fingers follow at residues 113-133 and 150-174; these read CQVC…CEGC and CTRA…LKKC. The region spanning 216–514 is the NR LBD domain; that stretch reads QYENLTEVMH…VSPVPTTLSE (299 aa). The disordered stretch occupies residues 465-514; that stretch reads ERPRRISSSGAQEPLNLSLPHVRHQVKRDVDSDEQLEEMKVSPVPTTLSE.

The protein belongs to the nuclear hormone receptor family.

The protein resides in the nucleus. Its function is as follows. Orphan nuclear receptor. The protein is Nuclear hormone receptor family member nhr-85 (nhr-85) of Caenorhabditis elegans.